The sequence spans 228 residues: MTARRAPAVNRDGLEQMLVEGTTALDLALTDAQHNQLLDYVALLGKWNAVYNLTAIRDPKQMLIQHILDSLSIVSHLRGRASARVLDVGSGGGLPGIVLAIVEPDWQITLNDIVQKKSAFQTQMRAELKLANLSVVTGRVESLQPGVEVPEKFDMIVSRAFADLSDFVKLARHLVAPGGSIWAMKGVHPDDEIARLPEGSRVKQTIRLAVPMLDAERHLIEVAVDEAN.

S-adenosyl-L-methionine-binding positions include Gly89, Leu94, Val140–Glu141, and Arg159.

This sequence belongs to the methyltransferase superfamily. RNA methyltransferase RsmG family.

It localises to the cytoplasm. It catalyses the reaction guanosine(527) in 16S rRNA + S-adenosyl-L-methionine = N(7)-methylguanosine(527) in 16S rRNA + S-adenosyl-L-homocysteine. Its function is as follows. Specifically methylates the N7 position of guanine in position 527 of 16S rRNA. This is Ribosomal RNA small subunit methyltransferase G from Burkholderia lata (strain ATCC 17760 / DSM 23089 / LMG 22485 / NCIMB 9086 / R18194 / 383).